The following is a 306-amino-acid chain: uncharacterized protein (306 aa).

Asp-204 acts as the Proton acceptor in catalysis.

Belongs to the aminoglycoside phosphotransferase family.

This is an uncharacterized protein from Bacillus subtilis (strain 168).